A 288-amino-acid polypeptide reads, in one-letter code: MYTEGFIDVTGGRVSFQKFDENGGGTPVIVLHGGPGSSCYSLLGLKALAKDRPVILYDQLGCGKSDRPMDTTLWRLDRFVEELAQIRQALNLDEVHILGHSWGTTLAAAYCLTKPSGVKSVIFSSPCLSAPLWEQDQKRNLKKLPLDVQETINRCEENGTTDSEEFAAAIEVFGKHFVNRLEKQPEWLEQKPSGYRNADIYNIMWGPSEFTVLGNLKNFDCTTQLKEITCPSLYTCGRFDEATPETTEYYSSLTPKSKFHVFEKSAHMPYIEEPEEYLAVIGDFLNSI.

Positions 27-274 constitute an AB hydrolase-1 domain; that stretch reads PVIVLHGGPG…SAHMPYIEEP (248 aa). Catalysis depends on S101, which acts as the Nucleophile. D240 is an active-site residue. The active-site Proton donor is H267.

Belongs to the peptidase S33 family. Monomer.

The protein localises to the cytoplasm. The catalysed reaction is Release of N-terminal proline from a peptide.. Completely inhibited by p-chloromercuribenzoate (PCMB) and heavy metal salts. Partially inhibited by proline and proline derivatives with proline as the amino terminus. Enzyme inactivated by PCMB is reactivated by incubation with 2-mercaptoethanol. Its function is as follows. Releases the N-terminal proline from various substrates including at least dipeptides Pro-Pro, Pro-Gln, Pro-Trp and Pro-Tyr. Also acts on amides (Pro-beta NA) and oligopeptides including Pro-Leu-GlyNH2, Pro-Leu-Gly, Pro-Phe-Gly-Lys, Pro-Pro-Ala-OBut and Pro-Pro-Gly-(Pro-Pro-Gly)(4). Higher activity toward small peptides (up to three residues), but very low activity for longer peptides. Has no activity against p-nitrophenyl acetate, poly_L-proline, Met-Pro or amino acyl amides other than Pro-betaNA (Pyr-betaNA, Phe-betaNA, Cys-betaNA, Met-betaNA, Leu-betaNA, Ala-betaNA and Z-Gly-Pro-betaNA). In Heyndrickxia coagulans (Weizmannia coagulans), this protein is Proline iminopeptidase (pip).